We begin with the raw amino-acid sequence, 434 residues long: Enolase (434 aa).

Substrate contacts are provided by His158 and Glu167. Glu210 acts as the Proton donor in catalysis. Asp245, Glu294, and Asp319 together coordinate Mg(2+). Positions 294 and 319 each coordinate substrate. Lys344 acts as the Proton acceptor in catalysis. Substrate-binding positions include 371–374 (SHRS) and Lys395.

This sequence belongs to the enolase family. Homodimer. Mg(2+) is required as a cofactor.

It is found in the cytoplasm. It catalyses the reaction (2R)-2-phosphoglycerate = phosphoenolpyruvate + H2O. It participates in carbohydrate degradation; glycolysis; pyruvate from D-glyceraldehyde 3-phosphate: step 4/5. This chain is Enolase (ENO), found in Schistosoma japonicum (Blood fluke).